We begin with the raw amino-acid sequence, 177 residues long: Dual-action ribosomal maturation protein DarP (177 aa).

Over residues 1–12 (MKIVGDSEHFKQ) the composition is skewed to basic and acidic residues. The tract at residues 1-26 (MKIVGDSEHFKQPYDSNDEYVSKTED) is disordered.

It belongs to the DarP family.

It localises to the cytoplasm. Its function is as follows. Member of a network of 50S ribosomal subunit biogenesis factors which assembles along the 30S-50S interface, preventing incorrect 23S rRNA structures from forming. Promotes peptidyl transferase center (PTC) maturation. In Shewanella oneidensis (strain ATCC 700550 / JCM 31522 / CIP 106686 / LMG 19005 / NCIMB 14063 / MR-1), this protein is Dual-action ribosomal maturation protein DarP.